We begin with the raw amino-acid sequence, 437 residues long: Protein translocase subunit SecY (437 aa).

10 consecutive transmembrane segments (helical) span residues 23–43, 77–97, 125–145, 154–174, 183–203, 217–237, 271–291, 315–335, 367–387, and 395–415; these read IVFLIVAIIVFRIGSFIPIPG, IFALGIMPYISASIIIQLLTL, LILALVQSIGIAMTLPNIAGI, FYFYLIAIISLVTSTMFLMWL, IGNGISIIIFIGIIAGLPSAI, ILLFLFILLLIFSVIFLVVFM, MAGVIPAIFASSIVLFPATII, YLILYISAIVFFCFFYTGLVF, IMLRLTLVGSLYITFICLIPE, and VPFYFGGTSLLIVVVVIIDFI.

It belongs to the SecY/SEC61-alpha family. As to quaternary structure, component of the Sec protein translocase complex. Heterotrimer consisting of SecY, SecE and SecG subunits. The heterotrimers can form oligomers, although 1 heterotrimer is thought to be able to translocate proteins. Interacts with the ribosome. Interacts with SecDF, and other proteins may be involved. Interacts with SecA.

Its subcellular location is the cell membrane. In terms of biological role, the central subunit of the protein translocation channel SecYEG. Consists of two halves formed by TMs 1-5 and 6-10. These two domains form a lateral gate at the front which open onto the bilayer between TMs 2 and 7, and are clamped together by SecE at the back. The channel is closed by both a pore ring composed of hydrophobic SecY resides and a short helix (helix 2A) on the extracellular side of the membrane which forms a plug. The plug probably moves laterally to allow the channel to open. The ring and the pore may move independently. This chain is Protein translocase subunit SecY, found in Buchnera aphidicola subsp. Acyrthosiphon pisum (strain APS) (Acyrthosiphon pisum symbiotic bacterium).